The chain runs to 651 residues: DNA ligase (651 aa).

NAD(+) is bound by residues 32-36, 75-76, and E106; these read DAEYD and SL. Residue K108 is the N6-AMP-lysine intermediate of the active site. NAD(+) contacts are provided by R129, E164, K271, and K295. Positions 389, 392, 405, and 411 each coordinate Zn(2+). Residues 575 to 651 form the BRCT domain; it reads SSDSFLNNKI…LDEEQWNRLC (77 aa).

It belongs to the NAD-dependent DNA ligase family. LigA subfamily. It depends on Mg(2+) as a cofactor. Mn(2+) serves as cofactor.

The catalysed reaction is NAD(+) + (deoxyribonucleotide)n-3'-hydroxyl + 5'-phospho-(deoxyribonucleotide)m = (deoxyribonucleotide)n+m + AMP + beta-nicotinamide D-nucleotide.. In terms of biological role, DNA ligase that catalyzes the formation of phosphodiester linkages between 5'-phosphoryl and 3'-hydroxyl groups in double-stranded DNA using NAD as a coenzyme and as the energy source for the reaction. It is essential for DNA replication and repair of damaged DNA. This chain is DNA ligase, found in Wolbachia pipientis subsp. Culex pipiens (strain wPip).